The following is a 223-amino-acid chain: UPF0758 protein Cvib_1178 (223 aa).

An MPN domain is found at 100 to 222 (KIQGARDVYE…WYSFRENNQL (123 aa)). H171, H173, and D184 together coordinate Zn(2+). The short motif at 171 to 184 (HNHPSGDTEPSNAD) is the JAMM motif element.

Belongs to the UPF0758 family.

In Chlorobium phaeovibrioides (strain DSM 265 / 1930) (Prosthecochloris vibrioformis (strain DSM 265)), this protein is UPF0758 protein Cvib_1178.